A 250-amino-acid polypeptide reads, in one-letter code: uncharacterized protein (250 aa).

The protein to class-3 of adenylyl cyclases.

This is an uncharacterized protein from Mycobacterium tuberculosis (strain ATCC 25618 / H37Rv).